A 338-amino-acid chain; its full sequence is Ketol-acid reductoisomerase (NADP(+)) (338 aa).

One can recognise a KARI N-terminal Rossmann domain in the interval 1–181 (MKVFYDNDAD…GGTRAGVIET (181 aa)). Residues 24-27 (YGSQ), Arg47, Ser50, Ser52, and 82-85 (DEGQ) contribute to the NADP(+) site. His107 is an active-site residue. Residue Gly133 participates in NADP(+) binding. The region spanning 182–327 (SFREETETDL…SKLRSMMTWI (146 aa)) is the KARI C-terminal knotted domain. 4 residues coordinate Mg(2+): Asp190, Glu194, Glu226, and Glu230. A substrate-binding site is contributed by Ser251.

This sequence belongs to the ketol-acid reductoisomerase family. The cofactor is Mg(2+).

The catalysed reaction is (2R)-2,3-dihydroxy-3-methylbutanoate + NADP(+) = (2S)-2-acetolactate + NADPH + H(+). It catalyses the reaction (2R,3R)-2,3-dihydroxy-3-methylpentanoate + NADP(+) = (S)-2-ethyl-2-hydroxy-3-oxobutanoate + NADPH + H(+). It participates in amino-acid biosynthesis; L-isoleucine biosynthesis; L-isoleucine from 2-oxobutanoate: step 2/4. The protein operates within amino-acid biosynthesis; L-valine biosynthesis; L-valine from pyruvate: step 2/4. In terms of biological role, involved in the biosynthesis of branched-chain amino acids (BCAA). Catalyzes an alkyl-migration followed by a ketol-acid reduction of (S)-2-acetolactate (S2AL) to yield (R)-2,3-dihydroxy-isovalerate. In the isomerase reaction, S2AL is rearranged via a Mg-dependent methyl migration to produce 3-hydroxy-3-methyl-2-ketobutyrate (HMKB). In the reductase reaction, this 2-ketoacid undergoes a metal-dependent reduction by NADPH to yield (R)-2,3-dihydroxy-isovalerate. This chain is Ketol-acid reductoisomerase (NADP(+)), found in Acidithiobacillus ferrooxidans (strain ATCC 23270 / DSM 14882 / CIP 104768 / NCIMB 8455) (Ferrobacillus ferrooxidans (strain ATCC 23270)).